The primary structure comprises 396 residues: Elongation factor Tu (396 aa).

Positions lysine 10–glutamate 206 constitute a tr-type G domain. A G1 region spans residues glycine 19–threonine 26. A GTP-binding site is contributed by glycine 19–threonine 26. Threonine 26 lines the Mg(2+) pocket. The interval glycine 60–serine 64 is G2. Residues aspartate 81 to glycine 84 form a G3 region. GTP is bound by residues aspartate 81 to histidine 85 and asparagine 136 to aspartate 139. Residues asparagine 136 to aspartate 139 are G4. The segment at serine 174–leucine 176 is G5.

The protein belongs to the TRAFAC class translation factor GTPase superfamily. Classic translation factor GTPase family. EF-Tu/EF-1A subfamily. In terms of assembly, monomer.

It localises to the cytoplasm. It carries out the reaction GTP + H2O = GDP + phosphate + H(+). GTP hydrolase that promotes the GTP-dependent binding of aminoacyl-tRNA to the A-site of ribosomes during protein biosynthesis. This chain is Elongation factor Tu, found in Bradyrhizobium diazoefficiens (strain JCM 10833 / BCRC 13528 / IAM 13628 / NBRC 14792 / USDA 110).